The primary structure comprises 224 residues: Large ribosomal subunit protein uL3 (224 aa).

The residue at position 158 (glutamine 158) is an N5-methylglutamine.

Belongs to the universal ribosomal protein uL3 family. In terms of assembly, part of the 50S ribosomal subunit. Forms a cluster with proteins L14 and L19. Post-translationally, methylated by PrmB.

Functionally, one of the primary rRNA binding proteins, it binds directly near the 3'-end of the 23S rRNA, where it nucleates assembly of the 50S subunit. This Acidovorax sp. (strain JS42) protein is Large ribosomal subunit protein uL3.